The sequence spans 256 residues: Major prion protein (256 aa).

An N-terminal signal peptide occupies residues 1–24 (MVKSHIGSWILVLFVAMWSDVGLC). The segment at 25-233 (KKRPKPGGGW…ESQAYYQRGA (209 aa)) is interaction with GRB2, ERI3 and SYN1. The tract at residues 28–110 (PKPGGGWNTG…QWNKPSKPKT (83 aa)) is disordered. Tandem repeats lie at residues 54-62 (PQGGGGWGQ), 63-70 (PHGGGWGQ), 71-78 (PHGGGWGQ), 79-86 (PHGGGWGQ), and 87-95 (PHGGGGWGQ). The interval 54-95 (PQGGGGWGQPHGGGWGQPHGGGWGQPHGGGWGQPHGGGGWGQ) is 5 X 8 AA tandem repeats of P-H-G-G-G-W-G-Q. Positions 55-97 (QGGGGWGQPHGGGWGQPHGGGWGQPHGGGWGQPHGGGGWGQGG) are enriched in gly residues. Positions 64, 65, 66, 72, 73, 74, 80, 81, 82, 88, 90, and 91 each coordinate Cu(2+). An intrachain disulfide couples cysteine 182 to cysteine 217. N-linked (GlcNAc...) asparagine glycosylation is found at asparagine 184 and asparagine 200. Residue alanine 233 is the site of GPI-anchor amidated alanine attachment. Residues 234-256 (SVILFSSPPVILLISFLIFLIVG) constitute a propeptide, removed in mature form.

Belongs to the prion family. Monomer and homodimer. Has a tendency to aggregate into amyloid fibrils containing a cross-beta spine, formed by a steric zipper of superposed beta-strands. Soluble oligomers may represent an intermediate stage on the path to fibril formation. Copper binding may promote oligomerization. Interacts with GRB2, APP, ERI3/PRNPIP and SYN1. Mislocalized cytosolically exposed PrP interacts with MGRN1; this interaction alters MGRN1 subcellular location and causes lysosomal enlargement. Interacts with KIAA1191.

It is found in the cell membrane. It localises to the golgi apparatus. In terms of biological role, its primary physiological function is unclear. Has cytoprotective activity against internal or environmental stresses. May play a role in neuronal development and synaptic plasticity. May be required for neuronal myelin sheath maintenance. May play a role in iron uptake and iron homeostasis. Soluble oligomers are toxic to cultured neuroblastoma cells and induce apoptosis (in vitro). Association with GPC1 (via its heparan sulfate chains) targets PRNP to lipid rafts. Also provides Cu(2+) or Zn(2+) for the ascorbate-mediated GPC1 deaminase degradation of its heparan sulfate side chains. This Odocoileus hemionus (Mule deer) protein is Major prion protein (PRNP).